A 118-amino-acid polypeptide reads, in one-letter code: MKNKYIEQFEAKQIEGKNVPDFRAGDTLKLAIRIKEGDKTRIQNFEGICIARRGNGVSETFIVRKIGANNVGVERIFPIYSESLESITVLRRGRVRRARLFYLRDRRGKAARIKELKK.

Belongs to the bacterial ribosomal protein bL19 family.

Its function is as follows. This protein is located at the 30S-50S ribosomal subunit interface and may play a role in the structure and function of the aminoacyl-tRNA binding site. This Campylobacter jejuni subsp. jejuni serotype O:2 (strain ATCC 700819 / NCTC 11168) protein is Large ribosomal subunit protein bL19.